Here is a 289-residue protein sequence, read N- to C-terminus: Phosphatidylglycerol--prolipoprotein diacylglyceryl transferase (289 aa).

4 helical membrane-spanning segments follow: residues Phe18 to Ala38, Asp54 to Phe74, Val86 to Thr106, and Leu116 to Gly136. Arg137 contacts a 1,2-diacyl-sn-glycero-3-phospho-(1'-sn-glycerol). 3 consecutive transmembrane segments (helical) span residues His177 to Leu197, Gly205 to Met225, and Leu236 to Tyr256.

It belongs to the Lgt family.

Its subcellular location is the cell membrane. The catalysed reaction is L-cysteinyl-[prolipoprotein] + a 1,2-diacyl-sn-glycero-3-phospho-(1'-sn-glycerol) = an S-1,2-diacyl-sn-glyceryl-L-cysteinyl-[prolipoprotein] + sn-glycerol 1-phosphate + H(+). It participates in protein modification; lipoprotein biosynthesis (diacylglyceryl transfer). Its function is as follows. Catalyzes the transfer of the diacylglyceryl group from phosphatidylglycerol to the sulfhydryl group of the N-terminal cysteine of a prolipoprotein, the first step in the formation of mature lipoproteins. This Halalkalibacterium halodurans (strain ATCC BAA-125 / DSM 18197 / FERM 7344 / JCM 9153 / C-125) (Bacillus halodurans) protein is Phosphatidylglycerol--prolipoprotein diacylglyceryl transferase.